The primary structure comprises 206 residues: Erythropoietin (206 aa).

A signal peptide spans 1–40; the sequence is MCEPAPPKPTQSAWHSFPECPALLLLLSLLLLPLGLPVLG. Cystine bridges form between Cys47–Cys201 and Cys69–Cys73. The N-linked (GlcNAc...) asparagine glycan is linked to Asn64. 2 N-linked (GlcNAc...) asparagine glycosylation sites follow: Asn78 and Asn123.

It belongs to the EPO/TPO family. As to expression, produced by kidney or liver of adult mammals and by liver of fetal or neonatal mammals.

The protein localises to the secreted. Functionally, hormone involved in the regulation of erythrocyte proliferation and differentiation and the maintenance of a physiological level of circulating erythrocyte mass. Binds to EPOR leading to EPOR dimerization and JAK2 activation thereby activating specific downstream effectors, including STAT1 and STAT3. This is Erythropoietin (EPO) from Canis lupus familiaris (Dog).